The following is a 255-amino-acid chain: Geranylgeranylglyceryl phosphate synthase (255 aa).

D34 and T64 together coordinate Mg(2+). Residues 182–188, 213–214, and 235–236 contribute to the sn-glycerol 1-phosphate site; these read YLEAGSG, GG, and GN.

It belongs to the GGGP/HepGP synthase family. Group II subfamily. Mg(2+) is required as a cofactor.

It localises to the cytoplasm. It carries out the reaction sn-glycerol 1-phosphate + (2E,6E,10E)-geranylgeranyl diphosphate = sn-3-O-(geranylgeranyl)glycerol 1-phosphate + diphosphate. Its pathway is membrane lipid metabolism; glycerophospholipid metabolism. Prenyltransferase that catalyzes the transfer of the geranylgeranyl moiety of geranylgeranyl diphosphate (GGPP) to the C3 hydroxyl of sn-glycerol-1-phosphate (G1P). This reaction is the first ether-bond-formation step in the biosynthesis of archaeal membrane lipids. In Saccharolobus islandicus (strain M.14.25 / Kamchatka #1) (Sulfolobus islandicus), this protein is Geranylgeranylglyceryl phosphate synthase.